Reading from the N-terminus, the 321-residue chain is Ferredoxin--NADP reductase (321 aa).

The FAD site is built by aspartate 34, glutamine 42, tyrosine 47, valine 87, phenylalanine 119, aspartate 278, and threonine 319.

It belongs to the ferredoxin--NADP reductase type 2 family. In terms of assembly, homodimer. FAD is required as a cofactor.

It carries out the reaction 2 reduced [2Fe-2S]-[ferredoxin] + NADP(+) + H(+) = 2 oxidized [2Fe-2S]-[ferredoxin] + NADPH. This Streptococcus pneumoniae serotype 4 (strain ATCC BAA-334 / TIGR4) protein is Ferredoxin--NADP reductase.